The following is a 334-amino-acid chain: Ketol-acid reductoisomerase (NADP(+)) (334 aa).

The region spanning 1 to 181 (MTTVYYDQDV…GATRAGVIET (181 aa)) is the KARI N-terminal Rossmann domain. NADP(+) contacts are provided by residues 25-28 (YGSQ), Arg48, Ser52, and 82-85 (DEIQ). His107 is an active-site residue. Gly133 contributes to the NADP(+) binding site. In terms of domain architecture, KARI C-terminal knotted spans 182–327 (TFKEETETDL…RELREMMPFI (146 aa)). 4 residues coordinate Mg(2+): Asp190, Glu194, Glu226, and Glu230. A substrate-binding site is contributed by Ser251.

It belongs to the ketol-acid reductoisomerase family. Requires Mg(2+) as cofactor.

It carries out the reaction (2R)-2,3-dihydroxy-3-methylbutanoate + NADP(+) = (2S)-2-acetolactate + NADPH + H(+). The enzyme catalyses (2R,3R)-2,3-dihydroxy-3-methylpentanoate + NADP(+) = (S)-2-ethyl-2-hydroxy-3-oxobutanoate + NADPH + H(+). It participates in amino-acid biosynthesis; L-isoleucine biosynthesis; L-isoleucine from 2-oxobutanoate: step 2/4. Its pathway is amino-acid biosynthesis; L-valine biosynthesis; L-valine from pyruvate: step 2/4. In terms of biological role, involved in the biosynthesis of branched-chain amino acids (BCAA). Catalyzes an alkyl-migration followed by a ketol-acid reduction of (S)-2-acetolactate (S2AL) to yield (R)-2,3-dihydroxy-isovalerate. In the isomerase reaction, S2AL is rearranged via a Mg-dependent methyl migration to produce 3-hydroxy-3-methyl-2-ketobutyrate (HMKB). In the reductase reaction, this 2-ketoacid undergoes a metal-dependent reduction by NADPH to yield (R)-2,3-dihydroxy-isovalerate. The chain is Ketol-acid reductoisomerase (NADP(+)) from Staphylococcus aureus (strain USA300).